The primary structure comprises 273 residues: 4-diphosphocytidyl-2-C-methyl-D-erythritol kinase (273 aa).

The active site involves lysine 12. 90-100 lines the ATP pocket; it reads PVASGIGGGSA. Aspartate 122 is an active-site residue.

This sequence belongs to the GHMP kinase family. IspE subfamily.

The enzyme catalyses 4-CDP-2-C-methyl-D-erythritol + ATP = 4-CDP-2-C-methyl-D-erythritol 2-phosphate + ADP + H(+). It participates in isoprenoid biosynthesis; isopentenyl diphosphate biosynthesis via DXP pathway; isopentenyl diphosphate from 1-deoxy-D-xylulose 5-phosphate: step 3/6. Its function is as follows. Catalyzes the phosphorylation of the position 2 hydroxy group of 4-diphosphocytidyl-2C-methyl-D-erythritol. The protein is 4-diphosphocytidyl-2-C-methyl-D-erythritol kinase of Paracoccus denitrificans (strain Pd 1222).